Here is a 114-residue protein sequence, read N- to C-terminus: MRHYEVVFLVHPDQSEQVPAMIERYRGLIEENGGAIHRLEDWGRRQLAYLINKVHKAHYILMNIECDQETLKELENLFYYNDAVLRDMFIKRNEAVTEPSVMASQKEDKRRGDK.

This sequence belongs to the bacterial ribosomal protein bS6 family.

In terms of biological role, binds together with bS18 to 16S ribosomal RNA. This chain is Small ribosomal subunit protein bS6, found in Hydrogenovibrio crunogenus (strain DSM 25203 / XCL-2) (Thiomicrospira crunogena).